The following is a 417-amino-acid chain: Gamma-glutamyl phosphate reductase (417 aa).

The protein belongs to the gamma-glutamyl phosphate reductase family.

It is found in the cytoplasm. It catalyses the reaction L-glutamate 5-semialdehyde + phosphate + NADP(+) = L-glutamyl 5-phosphate + NADPH + H(+). Its pathway is amino-acid biosynthesis; L-proline biosynthesis; L-glutamate 5-semialdehyde from L-glutamate: step 2/2. In terms of biological role, catalyzes the NADPH-dependent reduction of L-glutamate 5-phosphate into L-glutamate 5-semialdehyde and phosphate. The product spontaneously undergoes cyclization to form 1-pyrroline-5-carboxylate. This chain is Gamma-glutamyl phosphate reductase, found in Shigella flexneri serotype 5b (strain 8401).